The chain runs to 712 residues: Polyribonucleotide nucleotidyltransferase (712 aa).

Mg(2+) is bound by residues Asp-485 and Asp-491. One can recognise a KH domain in the interval 552 to 611 (PKITTISVPKEKIRDVIGQGGKVIREIVEYSGAKIDINDDGTIMIAASSEDQATRAIERI). Residues 621-689 (GAIYTGKVVK…DRGKVKLSMR (69 aa)) form the S1 motif domain.

The protein belongs to the polyribonucleotide nucleotidyltransferase family. The cofactor is Mg(2+).

The protein resides in the cytoplasm. It carries out the reaction RNA(n+1) + phosphate = RNA(n) + a ribonucleoside 5'-diphosphate. Involved in mRNA degradation. Catalyzes the phosphorolysis of single-stranded polyribonucleotides processively in the 3'- to 5'-direction. The polypeptide is Polyribonucleotide nucleotidyltransferase (Gluconacetobacter diazotrophicus (strain ATCC 49037 / DSM 5601 / CCUG 37298 / CIP 103539 / LMG 7603 / PAl5)).